A 236-amino-acid chain; its full sequence is MPDTPSPRDRLIVALDMATTDEAERLIDRLGDAASFYKIGYRLGYAGGLALAERLVKGGAKVFLDLKLHDIGNTVEEGVQSLARLGAHLLTVHAYPQTMRAAVRGRDSVPGSALRLLAVTVLTSYDDADAREAGYALSVSELVAIRALAAREIGIDGIVCAATEAAQVREIVGPDGLIVTPGIRPAGSDTGDQKRVVTPAAAIRAGVDYIVVGRPITAAADPRAVAQSIVAEIAAA.

Residues Asp16, Lys38, 65–74, Thr123, Arg184, Gln193, Gly213, and Arg214 contribute to the substrate site; that span reads DLKLHDIGNT. Lys67 serves as the catalytic Proton donor.

It belongs to the OMP decarboxylase family. Type 1 subfamily. As to quaternary structure, homodimer.

The catalysed reaction is orotidine 5'-phosphate + H(+) = UMP + CO2. It participates in pyrimidine metabolism; UMP biosynthesis via de novo pathway; UMP from orotate: step 2/2. Functionally, catalyzes the decarboxylation of orotidine 5'-monophosphate (OMP) to uridine 5'-monophosphate (UMP). This chain is Orotidine 5'-phosphate decarboxylase, found in Methylobacterium nodulans (strain LMG 21967 / CNCM I-2342 / ORS 2060).